The sequence spans 226 residues: Cytidylate kinase (226 aa).

10 to 18 (GPASSGKST) serves as a coordination point for ATP.

The protein belongs to the cytidylate kinase family. Type 1 subfamily.

It is found in the cytoplasm. The catalysed reaction is CMP + ATP = CDP + ADP. It carries out the reaction dCMP + ATP = dCDP + ADP. This is Cytidylate kinase from Streptococcus pyogenes serotype M4 (strain MGAS10750).